A 178-amino-acid chain; its full sequence is Interleukin-10 (178 aa).

A signal peptide spans 1 to 18 (MHSSALLCCLVFLAGVAA). 2 disulfides stabilise this stretch: C30/C126 and C80/C132. N-linked (GlcNAc...) asparagine glycosylation is present at N134.

The protein belongs to the IL-10 family. Homodimer. Interacts with IL10RA and IL10RB.

It localises to the secreted. Functionally, major immune regulatory cytokine that acts on many cells of the immune system where it has profound anti-inflammatory functions, limiting excessive tissue disruption caused by inflammation. Mechanistically, IL10 binds to its heterotetrameric receptor comprising IL10RA and IL10RB leading to JAK1 and STAT2-mediated phosphorylation of STAT3. In turn, STAT3 translocates to the nucleus where it drives expression of anti-inflammatory mediators. Targets antigen-presenting cells (APCs) such as macrophages and monocytes and inhibits their release of pro-inflammatory cytokines including granulocyte-macrophage colony-stimulating factor /GM-CSF, granulocyte colony-stimulating factor/G-CSF, IL-1 alpha, IL-1 beta, IL-6, IL-8 and TNF-alpha. Also interferes with antigen presentation by reducing the expression of MHC-class II and co-stimulatory molecules, thereby inhibiting their ability to induce T cell activation. In addition, controls the inflammatory response of macrophages by reprogramming essential metabolic pathways including mTOR signaling. The protein is Interleukin-10 (IL10) of Bos taurus (Bovine).